Reading from the N-terminus, the 460-residue chain is Ufm1-specific protease 2 (460 aa).

Residues Cys293, Asp417, and His419 contribute to the active site.

The protein belongs to the peptidase C78 family.

The protein resides in the endoplasmic reticulum. Its subcellular location is the cytoplasm. It localises to the nucleus. Functionally, thiol-dependent isopeptidase that specifically cleaves UFM1, a ubiquitin-like modifier protein, from conjugated proteins. While it is also able to mediate the processing of UFM1 precursors, a prerequisite for conjugation reactions, UFSP2 mainly acts as a protein deUFMylase that mediates deconjugation of UFM1 from target proteins. The chain is Ufm1-specific protease 2 from Gallus gallus (Chicken).